Consider the following 117-residue polypeptide: Large ribosomal subunit protein bL19 (117 aa).

This sequence belongs to the bacterial ribosomal protein bL19 family.

Functionally, this protein is located at the 30S-50S ribosomal subunit interface and may play a role in the structure and function of the aminoacyl-tRNA binding site. This is Large ribosomal subunit protein bL19 from Thermotoga neapolitana (strain ATCC 49049 / DSM 4359 / NBRC 107923 / NS-E).